A 548-amino-acid polypeptide reads, in one-letter code: BTB/POZ domain-containing protein At5g17580 (548 aa).

Residues 7 to 74 (SDLHINVKGV…CNGSEFKFTS (68 aa)) form the BTB domain. The NPH3 domain occupies 180–442 (DWKSEDLITI…VNVLCVSQLQ (263 aa)). At Y383 the chain carries Phosphotyrosine. Residues 442–493 (QIRDTVAKEIKGMEEKVDEEEEEEIEVSSDEDEMEKMSNKLLGLEIENDECV) adopt a coiled-coil conformation.

The protein belongs to the NPH3 family.

It participates in protein modification; protein ubiquitination. May act as a substrate-specific adapter of an E3 ubiquitin-protein ligase complex (CUL3-RBX1-BTB) which mediates the ubiquitination and subsequent proteasomal degradation of target proteins. This is BTB/POZ domain-containing protein At5g17580 from Arabidopsis thaliana (Mouse-ear cress).